The sequence spans 201 residues: Protein GrpE (201 aa).

The protein belongs to the GrpE family. In terms of assembly, homodimer.

The protein localises to the cytoplasm. Its function is as follows. Participates actively in the response to hyperosmotic and heat shock by preventing the aggregation of stress-denatured proteins, in association with DnaK and GrpE. It is the nucleotide exchange factor for DnaK and may function as a thermosensor. Unfolded proteins bind initially to DnaJ; upon interaction with the DnaJ-bound protein, DnaK hydrolyzes its bound ATP, resulting in the formation of a stable complex. GrpE releases ADP from DnaK; ATP binding to DnaK triggers the release of the substrate protein, thus completing the reaction cycle. Several rounds of ATP-dependent interactions between DnaJ, DnaK and GrpE are required for fully efficient folding. This Shewanella frigidimarina (strain NCIMB 400) protein is Protein GrpE.